The primary structure comprises 206 residues: Protein GET1 (206 aa).

At 1 to 4 (MPSL) the chain is on the lumenal side. The chain crosses the membrane as a helical span at residues 5-24 (LITVLFLNVIIYVVNTVGAA). At 25–110 (TVDGLLWLLY…TFDMTIKIAR (86 aa)) the chain is on the cytoplasmic side. A coiled-coil region spans residues 75 to 100 (AKLRRRHDKALEAYEAKNNELTQSKS). Residues 111-131 (WAATSGLMLFLQFWYSKTPIF) traverse the membrane as a helical segment. Topologically, residues 132-155 (TLPPGWIPWQVQWVLSFPRAPMGT) are lumenal. Residues 156–172 (VSIQIWGGACATVVALV) form a helical membrane-spanning segment. Over 173-206 (GDAMKASLAYVSKPKIDRIKLGATMEGKEGKKRQ) the chain is Cytoplasmic.

Belongs to the WRB/GET1 family. As to quaternary structure, interacts with GET3.

The protein localises to the endoplasmic reticulum membrane. In terms of biological role, required for the post-translational delivery of tail-anchored (TA) proteins to the endoplasmic reticulum. Acts as a membrane receptor for soluble GET3, which recognizes and selectively binds the transmembrane domain of TA proteins in the cytosol. In Ajellomyces capsulatus (strain G186AR / H82 / ATCC MYA-2454 / RMSCC 2432) (Darling's disease fungus), this protein is Protein GET1.